Reading from the N-terminus, the 235-residue chain is 2,3-bisphosphoglycerate-dependent phosphoglycerate mutase 1 (235 aa).

Residues 8-15 (RHGESVAN), 21-22 (TG), R60, 87-90 (ERHY), K98, and 114-115 (RR) each bind substrate. The active-site Tele-phosphohistidine intermediate is H9. E87 (proton donor/acceptor) is an active-site residue.

Belongs to the phosphoglycerate mutase family. BPG-dependent PGAM subfamily.

The catalysed reaction is (2R)-2-phosphoglycerate = (2R)-3-phosphoglycerate. The protein operates within carbohydrate degradation; glycolysis; pyruvate from D-glyceraldehyde 3-phosphate: step 3/5. Catalyzes the interconversion of 2-phosphoglycerate and 3-phosphoglycerate. This is 2,3-bisphosphoglycerate-dependent phosphoglycerate mutase 1 from Latilactobacillus sakei subsp. sakei (strain 23K) (Lactobacillus sakei subsp. sakei).